Here is a 32-residue protein sequence, read N- to C-terminus: MSDIN-like toxin proprotein 1 (32 aa).

Positions 1–10 are excised as a propeptide; sequence MSDINVTRLP. The segment at residues 11–18 is a cross-link (cyclopeptide (Gly-Pro)); the sequence is GFVPILFP. A propeptide spanning residues 19–32 is cleaved from the precursor; sequence CVGDDVNTALTRGE.

Belongs to the MSDIN fungal toxin family. Processed by the macrocyclase-peptidase enzyme POPB to yield a toxic cyclic octapeptide. POPB first removes 10 residues from the N-terminus. Conformational trapping of the remaining peptide forces the enzyme to release this intermediate rather than proceed to macrocyclization. The enzyme rebinds the remaining peptide in a different conformation and catalyzes macrocyclization of the N-terminal 8 residues.

Probable toxin that belongs to the MSDIN-like toxin family responsible for a large number of food poisoning cases and deaths. The polypeptide is MSDIN-like toxin proprotein 1 (Amanita bisporigera (Destroying angel)).